Reading from the N-terminus, the 216-residue chain is Thiopurine S-methyltransferase (216 aa).

The S-adenosyl-L-methionine site is built by W10, L45, E66, and R123.

It belongs to the class I-like SAM-binding methyltransferase superfamily. TPMT family.

It is found in the cytoplasm. The catalysed reaction is S-adenosyl-L-methionine + a thiopurine = S-adenosyl-L-homocysteine + a thiopurine S-methylether.. This chain is Thiopurine S-methyltransferase, found in Pseudomonas putida (strain ATCC 700007 / DSM 6899 / JCM 31910 / BCRC 17059 / LMG 24140 / F1).